A 91-amino-acid polypeptide reads, in one-letter code: Transcription factor ILI3 (91 aa).

Residues 3–58 (SRRGGGGGGGRITDEEINELISKLQALLPESSRSRGASRSSASKLLKETCSYIKSL) form the bHLH domain.

This sequence belongs to the bHLH protein family.

Its function is as follows. Atypical and probable non DNA-binding bHLH transcription that integrates multiple signaling pathways to regulate cell elongation and plant development. This chain is Transcription factor ILI3 (ILI3), found in Oryza sativa subsp. indica (Rice).